We begin with the raw amino-acid sequence, 182 residues long: Trypsin inhibitor 2 (182 aa).

Residue Q1 is modified to Pyrrolidone carboxylic acid. 2 disulfides stabilise this stretch: C40-C84 and C136-C147.

This sequence belongs to the protease inhibitor I3 (leguminous Kunitz-type inhibitor) family.

This Psophocarpus tetragonolobus (Winged bean) protein is Trypsin inhibitor 2.